We begin with the raw amino-acid sequence, 73 residues long: Translation initiation factor IF-1 (73 aa).

The region spanning 1-72 is the S1-like domain; it reads MAKDEIIEFE…SKGRITYRGK (72 aa).

It belongs to the IF-1 family. In terms of assembly, component of the 30S ribosomal translation pre-initiation complex which assembles on the 30S ribosome in the order IF-2 and IF-3, IF-1 and N-formylmethionyl-tRNA(fMet); mRNA recruitment can occur at any time during PIC assembly.

The protein resides in the cytoplasm. Its function is as follows. One of the essential components for the initiation of protein synthesis. Stabilizes the binding of IF-2 and IF-3 on the 30S subunit to which N-formylmethionyl-tRNA(fMet) subsequently binds. Helps modulate mRNA selection, yielding the 30S pre-initiation complex (PIC). Upon addition of the 50S ribosomal subunit IF-1, IF-2 and IF-3 are released leaving the mature 70S translation initiation complex. The sequence is that of Translation initiation factor IF-1 from Psychrobacter arcticus (strain DSM 17307 / VKM B-2377 / 273-4).